A 486-amino-acid chain; its full sequence is Replication factor C large subunit (486 aa).

An ATP-binding site is contributed by 46–53 (GPPGSGKT). The disordered stretch occupies residues 419-486 (VKKETPKKTE…KKQATLDSFF (68 aa)). Composition is skewed to basic and acidic residues over residues 420–432 (KKET…KPKE) and 442–480 (RISE…KKQA).

This sequence belongs to the activator 1 small subunits family. RfcL subfamily. Heteromultimer composed of small subunits (RfcS) and large subunits (RfcL).

Functionally, part of the RFC clamp loader complex which loads the PCNA sliding clamp onto DNA. In Methanococcus maripaludis (strain DSM 14266 / JCM 13030 / NBRC 101832 / S2 / LL), this protein is Replication factor C large subunit.